The sequence spans 118 residues: Late cornified envelope protein 1C (118 aa).

The segment covering 1–10 (MSCQQSQQQC) has biased composition (low complexity). Disordered regions lie at residues 1-23 (MSCQ…CPPK) and 87-118 (CHRP…GGCC). Over residues 11–23 (QPPPKCTPKCPPK) the composition is skewed to pro residues. Residues 90 to 103 (PQSSGCCSQPSGGS) show a composition bias toward low complexity. Positions 104 to 118 (SCCGGGSGQHSGGCC) are enriched in gly residues.

Belongs to the LCE family. As to quaternary structure, interacts with CYSRT1. In terms of tissue distribution, skin-specific. Expression was readily detected in adult trunk skin, adult arm skin, fetal skin, penal skin, vulva, esophagus and tongue. Not expressed in the cervix, rectum, lung, colon, or placenta.

Functionally, precursors of the cornified envelope of the stratum corneum. The chain is Late cornified envelope protein 1C (LCE1C) from Homo sapiens (Human).